The chain runs to 68 residues: Beta-defensin 1 (68 aa).

An N-terminal signal peptide occupies residues 1 to 21; it reads MRTSYLLLFILCLVLCDMDSG. Residues 22–32 constitute a propeptide that is removed on maturation; it reads DTFLTGLGHRS. 3 disulfides stabilise this stretch: cysteine 37/cysteine 66, cysteine 44/cysteine 59, and cysteine 49/cysteine 67.

Belongs to the beta-defensin family. As to quaternary structure, monomer. Homodimer.

The protein resides in the secreted. It is found in the membrane. Has bactericidal activity. May act as a ligand for C-C chemokine receptor CCR6. Positively regulates the sperm motility and bactericidal activity in a CCR6-dependent manner. Binds to CCR6 and triggers Ca2+ mobilization in the sperm which is important for its motility. The chain is Beta-defensin 1 (DEFB1) from Saguinus oedipus (Cotton-top tamarin).